The sequence spans 369 residues: Putative 2-aminoethylphosphonate import ATP-binding protein PhnT (369 aa).

One can recognise an ABC transporter domain in the interval 19–250; the sequence is IVLDSLRVAY…PPNRFAAEFL (232 aa). 51–58 is an ATP binding site; the sequence is GPSGSGKT.

This sequence belongs to the ABC transporter superfamily. 2-aminoethylphosphonate importer (TC 3.A.1.11.5) family.

Its subcellular location is the cell inner membrane. Probably part of the PhnSTUV complex (TC 3.A.1.11.5) involved in 2-aminoethylphosphonate import. Probably responsible for energy coupling to the transport system. This chain is Putative 2-aminoethylphosphonate import ATP-binding protein PhnT (phnT), found in Salmonella typhi.